The chain runs to 252 residues: 2-succinyl-6-hydroxy-2,4-cyclohexadiene-1-carboxylate synthase (252 aa).

The protein belongs to the AB hydrolase superfamily. MenH family. As to quaternary structure, monomer.

It catalyses the reaction 5-enolpyruvoyl-6-hydroxy-2-succinyl-cyclohex-3-ene-1-carboxylate = (1R,6R)-6-hydroxy-2-succinyl-cyclohexa-2,4-diene-1-carboxylate + pyruvate. It functions in the pathway quinol/quinone metabolism; 1,4-dihydroxy-2-naphthoate biosynthesis; 1,4-dihydroxy-2-naphthoate from chorismate: step 3/7. The protein operates within quinol/quinone metabolism; menaquinone biosynthesis. Its function is as follows. Catalyzes a proton abstraction reaction that results in 2,5-elimination of pyruvate from 2-succinyl-5-enolpyruvyl-6-hydroxy-3-cyclohexene-1-carboxylate (SEPHCHC) and the formation of 2-succinyl-6-hydroxy-2,4-cyclohexadiene-1-carboxylate (SHCHC). This is 2-succinyl-6-hydroxy-2,4-cyclohexadiene-1-carboxylate synthase from Shigella dysenteriae serotype 1 (strain Sd197).